We begin with the raw amino-acid sequence, 367 residues long: Histidinol-phosphate aminotransferase (367 aa).

Lys-221 is modified (N6-(pyridoxal phosphate)lysine).

Belongs to the class-II pyridoxal-phosphate-dependent aminotransferase family. Histidinol-phosphate aminotransferase subfamily. Homodimer. Pyridoxal 5'-phosphate serves as cofactor.

It catalyses the reaction L-histidinol phosphate + 2-oxoglutarate = 3-(imidazol-4-yl)-2-oxopropyl phosphate + L-glutamate. Its pathway is amino-acid biosynthesis; L-histidine biosynthesis; L-histidine from 5-phospho-alpha-D-ribose 1-diphosphate: step 7/9. The chain is Histidinol-phosphate aminotransferase from Erythrobacter litoralis (strain HTCC2594).